The chain runs to 75 residues: Small ribosomal subunit protein bS18 (75 aa).

Belongs to the bacterial ribosomal protein bS18 family. In terms of assembly, part of the 30S ribosomal subunit. Forms a tight heterodimer with protein bS6.

Its function is as follows. Binds as a heterodimer with protein bS6 to the central domain of the 16S rRNA, where it helps stabilize the platform of the 30S subunit. The chain is Small ribosomal subunit protein bS18 from Pectobacterium atrosepticum (strain SCRI 1043 / ATCC BAA-672) (Erwinia carotovora subsp. atroseptica).